A 95-amino-acid chain; its full sequence is Cell division protein FtsB (95 aa).

At 1 to 3 (MRW) the chain is on the cytoplasmic side. Residues 4 to 21 (VLAGLTALLLWLQGLLWF) form a helical membrane-spanning segment. Residues 22 to 95 (GEGGLNDVRG…QIIEREDDAR (74 aa)) lie on the Periplasmic side of the membrane. Residues 26-76 (LNDVRGLSRSVEAQREEVDRLRQRNQALEAEVNDLKTGLEALEERARSELG) are a coiled coil.

The protein belongs to the FtsB family. In terms of assembly, part of a complex composed of FtsB, FtsL and FtsQ.

It is found in the cell inner membrane. Its function is as follows. Essential cell division protein. May link together the upstream cell division proteins, which are predominantly cytoplasmic, with the downstream cell division proteins, which are predominantly periplasmic. The polypeptide is Cell division protein FtsB (Alkalilimnicola ehrlichii (strain ATCC BAA-1101 / DSM 17681 / MLHE-1)).